Consider the following 330-residue polypeptide: L-tryptophan isonitrile synthase AmbI2 (330 aa).

The protein belongs to the isocyanide synthase family.

The catalysed reaction is D-ribulose 5-phosphate + L-tryptophan = (2S)-3-(1H-indol-3-yl)-2-isocyanopropanoate + hydroxyacetone + formaldehyde + phosphate + H2O + H(+). Involved in the biosynthesis of ambiguines, a family of hapalindole-type alkaloids. Responsible for the synthesis of the isonitrile group on tryptophan using ribulose 5-phosphate as the source of the carbon atom. This chain is L-tryptophan isonitrile synthase AmbI2, found in Fischerella ambigua (strain UTEX 1903).